The following is a 402-amino-acid chain: Cholinephosphotransferase 1 (402 aa).

The Cytoplasmic segment spans residues Met1 to Ala62. The helical transmembrane segment at Pro63–Cys83 threads the bilayer. Residue Asn64 participates in CDP-choline binding. Residues Tyr84–Pro93 are Lumenal-facing. Residues Phe94–Ala118 traverse the membrane as a helical segment. Mg(2+) is bound by residues Asp111 and Asp114. Arg119 lines the CDP-choline pocket. Residues Arg119–Ser125 lie on the Cytoplasmic side of the membrane. A helical transmembrane segment spans residues Pro126–Ala150. Position 132 (Asp132) interacts with Mg(2+). The active-site Proton acceptor is the His133. Asp136 is a Mg(2+) binding site. Residues Val151–Met160 lie on the Lumenal side of the membrane. The chain crosses the membrane as a helical span at residues Phe161–Tyr179. Over Val180–Asp190 the chain is Cytoplasmic. A helical transmembrane segment spans residues Val191 to Val207. At Cys208 to Leu222 the chain is on the lumenal side. A helical transmembrane segment spans residues Pro223–Leu248. The Cytoplasmic portion of the chain corresponds to Ser249–Leu265. The chain crosses the membrane as a helical span at residues Ser266–Ile281. Topologically, residues Tyr282–Asn293 are lumenal. A helical membrane pass occupies residues Pro294 to His316. Topologically, residues Met317–Phe329 are cytoplasmic. Residues Ile330–Gln339 traverse the membrane as a helical segment. Topologically, residues Tyr340–Asp346 are lumenal. The chain crosses the membrane as a helical span at residues Glu347–His376. Over Leu377 to Asp402 the chain is Cytoplasmic.

This sequence belongs to the CDP-alcohol phosphatidyltransferase class-I family. Homodimer. Mg(2+) is required as a cofactor. The cofactor is Mn(2+).

The protein resides in the golgi apparatus membrane. The enzyme catalyses CDP-choline + a 1,2-diacyl-sn-glycerol = a 1,2-diacyl-sn-glycero-3-phosphocholine + CMP + H(+). It catalyses the reaction 1,2-dioctanoyl-sn-glycerol + CDP-choline = 1,2-dioctanoyl-sn-glycero-3-phosphocholine + CMP + H(+). It carries out the reaction 1-octadecanoyl-2-(5Z,8Z,11Z,14Z-eicosatetraenoyl)-sn-glycerol + CDP-choline = 1-octadecanoyl-2-(5Z,8Z,11Z,14Z-eicosatetraenoyl)-sn-glycero-3-phosphocholine + CMP + H(+). The catalysed reaction is 1-hexadecanoyl-2-(9Z-octadecenoyl)-sn-glycerol + CDP-choline = 1-hexadecanoyl-2-(9Z-octadecenoyl)-sn-glycero-3-phosphocholine + CMP + H(+). The enzyme catalyses 1-hexadecanoyl-2-(4Z,7Z,10Z,13Z,16Z,19Z-docosahexaenoyl)-sn-glycerol + CDP-choline = 1-hexadecanoyl-2-(4Z,7Z,10Z,13Z,16Z,19Z-docosahexaenoyl)-sn-glycero-3-phosphocholine + CMP + H(+). It functions in the pathway phospholipid metabolism; phosphatidylcholine biosynthesis; phosphatidylcholine from phosphocholine: step 2/2. Its function is as follows. Catalyzes the final step of de novo phosphatidylcholine (PC) synthesis, i.e. the transfer of choline phosphate from CDP-choline to the free hydroxyl of a diacylglycerol (DAG), producing a PC. It thereby plays a central role in the formation and maintenance of vesicular membranes. Shows a high preference for CDP-choline over CDP-ethanolamine as substrate. In Xenopus laevis (African clawed frog), this protein is Cholinephosphotransferase 1 (chpt1).